Consider the following 297-residue polypeptide: Acetyl-coenzyme A carboxylase carboxyl transferase subunit beta (297 aa).

The interval 1–23 (MSWIERILGRTSSSSSSSKSKVP) is disordered. Residues 26-295 (VWTKCTSCEQ…PFKTAELIVE (270 aa)) enclose the CoA carboxyltransferase N-terminal domain. The Zn(2+) site is built by Cys-30, Cys-33, Cys-49, and Cys-52. Residues 30–52 (CTSCEQVLYSEELKRNMHVCPKC) form a C4-type zinc finger.

This sequence belongs to the AccD/PCCB family. In terms of assembly, acetyl-CoA carboxylase is a heterohexamer composed of biotin carboxyl carrier protein (AccB), biotin carboxylase (AccC) and two subunits each of ACCase subunit alpha (AccA) and ACCase subunit beta (AccD). Requires Zn(2+) as cofactor.

It localises to the cytoplasm. The enzyme catalyses N(6)-carboxybiotinyl-L-lysyl-[protein] + acetyl-CoA = N(6)-biotinyl-L-lysyl-[protein] + malonyl-CoA. It participates in lipid metabolism; malonyl-CoA biosynthesis; malonyl-CoA from acetyl-CoA: step 1/1. Its function is as follows. Component of the acetyl coenzyme A carboxylase (ACC) complex. Biotin carboxylase (BC) catalyzes the carboxylation of biotin on its carrier protein (BCCP) and then the CO(2) group is transferred by the transcarboxylase to acetyl-CoA to form malonyl-CoA. This is Acetyl-coenzyme A carboxylase carboxyl transferase subunit beta from Actinobacillus pleuropneumoniae serotype 3 (strain JL03).